The following is a 209-amino-acid chain: Ribosomal RNA large subunit methyltransferase E (209 aa).

S-adenosyl-L-methionine-binding residues include Gly63, Trp65, Asp83, Asp99, and Asp124. The active-site Proton acceptor is Lys164.

The protein belongs to the class I-like SAM-binding methyltransferase superfamily. RNA methyltransferase RlmE family.

The protein localises to the cytoplasm. The catalysed reaction is uridine(2552) in 23S rRNA + S-adenosyl-L-methionine = 2'-O-methyluridine(2552) in 23S rRNA + S-adenosyl-L-homocysteine + H(+). Its function is as follows. Specifically methylates the uridine in position 2552 of 23S rRNA at the 2'-O position of the ribose in the fully assembled 50S ribosomal subunit. In Yersinia pseudotuberculosis serotype O:1b (strain IP 31758), this protein is Ribosomal RNA large subunit methyltransferase E.